The primary structure comprises 364 residues: tRNA 2-selenouridine synthase (364 aa).

The region spanning 14-137 is the Rhodanese domain; sequence LLADTPLIDV…LRQTAIQATW (124 aa). Cys-97 functions as the S-selanylcysteine intermediate in the catalytic mechanism.

The protein belongs to the SelU family. As to quaternary structure, monomer.

It carries out the reaction 5-methylaminomethyl-2-thiouridine(34) in tRNA + selenophosphate + (2E)-geranyl diphosphate + H2O + H(+) = 5-methylaminomethyl-2-selenouridine(34) in tRNA + (2E)-thiogeraniol + phosphate + diphosphate. The enzyme catalyses 5-methylaminomethyl-2-thiouridine(34) in tRNA + (2E)-geranyl diphosphate = 5-methylaminomethyl-S-(2E)-geranyl-thiouridine(34) in tRNA + diphosphate. It catalyses the reaction 5-methylaminomethyl-S-(2E)-geranyl-thiouridine(34) in tRNA + selenophosphate + H(+) = 5-methylaminomethyl-2-(Se-phospho)selenouridine(34) in tRNA + (2E)-thiogeraniol. The catalysed reaction is 5-methylaminomethyl-2-(Se-phospho)selenouridine(34) in tRNA + H2O = 5-methylaminomethyl-2-selenouridine(34) in tRNA + phosphate. Its function is as follows. Involved in the post-transcriptional modification of the uridine at the wobble position (U34) of tRNA(Lys), tRNA(Glu) and tRNA(Gln). Catalyzes the conversion of 2-thiouridine (S2U-RNA) to 2-selenouridine (Se2U-RNA). Acts in a two-step process involving geranylation of 2-thiouridine (S2U) to S-geranyl-2-thiouridine (geS2U) and subsequent selenation of the latter derivative to 2-selenouridine (Se2U) in the tRNA chain. In Salmonella typhi, this protein is tRNA 2-selenouridine synthase.